A 549-amino-acid chain; its full sequence is Nectin-3 (549 aa).

The first 57 residues, 1–57, serve as a signal peptide directing secretion; it reads MARTLRPSPLCPGGGKAQLSSASLLGAGLLLQPPTPPPLLLLLFPLLLFSRLCGALA. At 58 to 404 the chain is on the extracellular side; sequence GPIIVEPHVT…ATIKDDTIAT (347 aa). In terms of domain architecture, Ig-like V-type spans 59–165; that stretch reads PIIVEPHVTA…GNAQSSTTVT (107 aa). Asn73, Asn83, Asn125, Asn186, Asn222, and Asn331 each carry an N-linked (GlcNAc...) asparagine glycan. A disulfide bond links Cys78 and Cys148. Ig-like C2-type domains follow at residues 170–258 and 269–354; these read PTVS…KDIR and PEVS…KVIY. Disulfide bonds link Cys193–Cys246 and Cys291–Cys338. The chain crosses the membrane as a helical span at residues 405 to 425; it reads IIASVVGGALFIVLVSVLAGI. The Cytoplasmic segment spans residues 426 to 549; sequence FCYRRRRTFR…SVISRREWYV (124 aa).

It belongs to the nectin family. In terms of assembly, cis- and trans-homodimer. Can form trans-heterodimers with NECTIN1, NECTIN2, PVR, IGSF4B/Necl-1 and with IGSF4. Interaction between NECTIN1 and NECTIN3 on the pre- and postsynaptic sites, respectively, initiates the formation of puncta adherentia junctions between axons and dendrites. Interacts (via Cytoplasmic domain) with AFDN, providing a connection with the actin cytoskeleton. Binds with low affinity to TIGIT. As to quaternary structure, (Microbial infection) Interacts with C.difficile toxin TcdB, suggesting that it may contribute to TcdB toxin entry into cells. It was however shown that NECTIN3/PVRL3 does not act as a major receptor for TcdB. Predominantly expressed in testis and placenta as well as in many cell lines, including epithelial cell lines.

The protein resides in the cell membrane. Its subcellular location is the postsynaptic cell membrane. The protein localises to the cell junction. It localises to the adherens junction. Its function is as follows. Cell adhesion molecule that promotes cell-cell adhesion through heterophilic trans-interactions with nectins-like or other nectins, such as trans-interaction with NECTIN2 at Sertoli-spermatid junctions. Trans-interaction with PVR induces activation of CDC42 and RAC small G proteins through common signaling molecules such as SRC and RAP1. Induces endocytosis-mediated down-regulation of PVR from the cell surface, resulting in reduction of cell movement and proliferation. Involved in axon guidance by promoting contacts between the commissural axons and the floor plate cells. Also involved in the formation of cell-cell junctions, including adherens junctions and synapses. Promotes formation of checkerboard-like cellular pattern of hair cells and supporting cells in the auditory epithelium via heterophilic interaction with NECTIN1: NECTIN1 is present in the membrane of hair cells and associates with NECTIN3 on supporting cells, thereby mediating heterotypic adhesion between these two cell types. Plays a role in the morphology of the ciliary body. The protein is Nectin-3 of Homo sapiens (Human).